A 374-amino-acid chain; its full sequence is Secondary metabolism regulator laeA (374 aa).

The interval 1 to 75 (MFEMGPVGTR…NRNGSPSMSP (75 aa)) is disordered. Positions 23 to 40 (SYHSPTSSDRGRSRQNSD) are enriched in polar residues. The residue at position 207 (methionine 207) is an S-methylmethionine.

It belongs to the methyltransferase superfamily. LaeA methyltransferase family. In terms of assembly, component of the heterotrimeric velvet complex composed of laeA, veA and velB; VeA acting as a bridging protein between laeA and velB. Post-translationally, self-methylates at Met-207.

It localises to the nucleus. It catalyses the reaction L-methionyl-[protein] + S-adenosyl-L-methionine = S-methyl-L-methionyl-[protein] + S-adenosyl-L-homocysteine. Methyltransferase that performs automethylation at Met-207. No other methyl-accepting substrate has been identified yet. Component of the velvet transcription factor complex that acts as a global regulator for secondary metabolite gene expression. Controls the expression of the sterigmatocystin, penicillin, and lovastatin gene clusters. Controls light-dependent formation of the velB-vosA complex, veA protein modification, and is required for light-mediated inhibition of sexual development. Within the velvet complex, controls light-dependent secondary metabolism. Involved in the defense response against Drosophila melanogaster larval grazing. This chain is Secondary metabolism regulator laeA, found in Emericella nidulans (Aspergillus nidulans).